A 648-amino-acid polypeptide reads, in one-letter code: Bifunctional protein TilS/HprT (648 aa).

An ATP-binding site is contributed by 29–34 (SGGPDS). Asp-627 is a binding site for Mg(2+).

In the N-terminal section; belongs to the tRNA(Ile)-lysidine synthase family. This sequence in the C-terminal section; belongs to the purine/pyrimidine phosphoribosyltransferase family. Mg(2+) is required as a cofactor.

The protein localises to the cytoplasm. The enzyme catalyses IMP + diphosphate = hypoxanthine + 5-phospho-alpha-D-ribose 1-diphosphate. It carries out the reaction GMP + diphosphate = guanine + 5-phospho-alpha-D-ribose 1-diphosphate. It catalyses the reaction cytidine(34) in tRNA(Ile2) + L-lysine + ATP = lysidine(34) in tRNA(Ile2) + AMP + diphosphate + H(+). Functionally, ligates lysine onto the cytidine present at position 34 of the AUA codon-specific tRNA(Ile) that contains the anticodon CAU, in an ATP-dependent manner. Cytidine is converted to lysidine, thus changing the amino acid specificity of the tRNA from methionine to isoleucine. The polypeptide is Bifunctional protein TilS/HprT (tilS/hprT) (Listeria monocytogenes serovar 1/2a (strain ATCC BAA-679 / EGD-e)).